The primary structure comprises 203 residues: Small ribosomal subunit protein uS2 (203 aa).

This sequence belongs to the universal ribosomal protein uS2 family.

This Methanopyrus kandleri (strain AV19 / DSM 6324 / JCM 9639 / NBRC 100938) protein is Small ribosomal subunit protein uS2.